Consider the following 395-residue polypeptide: Tyrosine--tRNA ligase (395 aa).

Positions 42–51 (PTAPDIHLGH) match the 'HIGH' region motif. Positions 226-230 (KMSKS) match the 'KMSKS' region motif. Residue Lys-229 coordinates ATP. Residues 334–394 (IGLATLLKEA…GKRKFARVTV (61 aa)) form the S4 RNA-binding domain.

Belongs to the class-I aminoacyl-tRNA synthetase family. TyrS type 2 subfamily. Homodimer.

It is found in the cytoplasm. It carries out the reaction tRNA(Tyr) + L-tyrosine + ATP = L-tyrosyl-tRNA(Tyr) + AMP + diphosphate + H(+). Catalyzes the attachment of tyrosine to tRNA(Tyr) in a two-step reaction: tyrosine is first activated by ATP to form Tyr-AMP and then transferred to the acceptor end of tRNA(Tyr). This chain is Tyrosine--tRNA ligase, found in Haemophilus influenzae (strain 86-028NP).